A 610-amino-acid chain; its full sequence is Methionine--tRNA ligase (610 aa).

A 'HIGH' region motif is present at residues 12 to 22 (PYANGPRHIGH). Residues C144, C147, C157, and C160 each coordinate Zn(2+). The 'KMSKS' region motif lies at 348 to 352 (KFSSS). S351 serves as a coordination point for ATP.

The protein belongs to the class-I aminoacyl-tRNA synthetase family. MetG type 1 subfamily. Monomer. Zn(2+) serves as cofactor.

It is found in the cytoplasm. The catalysed reaction is tRNA(Met) + L-methionine + ATP = L-methionyl-tRNA(Met) + AMP + diphosphate. Functionally, is required not only for elongation of protein synthesis but also for the initiation of all mRNA translation through initiator tRNA(fMet) aminoacylation. This chain is Methionine--tRNA ligase, found in Corynebacterium diphtheriae (strain ATCC 700971 / NCTC 13129 / Biotype gravis).